The following is a 590-amino-acid chain: Phosphomethylpyrimidine synthase (590 aa).

Residues asparagine 197, methionine 226, tyrosine 255, histidine 291, 311–313 (SRG), 352–355 (DGLR), and glutamate 391 each bind substrate. Residue histidine 395 participates in Zn(2+) binding. Tyrosine 418 provides a ligand contact to substrate. Histidine 459 contributes to the Zn(2+) binding site. 3 residues coordinate [4Fe-4S] cluster: cysteine 539, cysteine 542, and cysteine 547.

It belongs to the ThiC family. [4Fe-4S] cluster serves as cofactor.

It catalyses the reaction 5-amino-1-(5-phospho-beta-D-ribosyl)imidazole + S-adenosyl-L-methionine = 4-amino-2-methyl-5-(phosphooxymethyl)pyrimidine + CO + 5'-deoxyadenosine + formate + L-methionine + 3 H(+). It participates in cofactor biosynthesis; thiamine diphosphate biosynthesis. Functionally, catalyzes the synthesis of the hydroxymethylpyrimidine phosphate (HMP-P) moiety of thiamine from aminoimidazole ribotide (AIR) in a radical S-adenosyl-L-methionine (SAM)-dependent reaction. The sequence is that of Phosphomethylpyrimidine synthase from Bacillus velezensis (strain DSM 23117 / BGSC 10A6 / LMG 26770 / FZB42) (Bacillus amyloliquefaciens subsp. plantarum).